Reading from the N-terminus, the 359-residue chain is 3-dehydroquinate synthase (359 aa).

NAD(+) is bound by residues 70-75, 104-108, 128-129, Lys-141, and Lys-150; these read DAEGGK, GAATD, and TT. Glu-183, His-246, and His-262 together coordinate Zn(2+).

The protein belongs to the sugar phosphate cyclases superfamily. Dehydroquinate synthase family. Requires Co(2+) as cofactor. The cofactor is Zn(2+). NAD(+) is required as a cofactor.

The protein localises to the cytoplasm. It carries out the reaction 7-phospho-2-dehydro-3-deoxy-D-arabino-heptonate = 3-dehydroquinate + phosphate. It participates in metabolic intermediate biosynthesis; chorismate biosynthesis; chorismate from D-erythrose 4-phosphate and phosphoenolpyruvate: step 2/7. Catalyzes the conversion of 3-deoxy-D-arabino-heptulosonate 7-phosphate (DAHP) to dehydroquinate (DHQ). The sequence is that of 3-dehydroquinate synthase from Mycolicibacterium gilvum (strain PYR-GCK) (Mycobacterium gilvum (strain PYR-GCK)).